The chain runs to 363 residues: Crh-like protein 3 (363 aa).

A signal peptide spans 1–19 (MSLLYLVALFVASICSVTA). A disulfide bridge connects residues cysteine 25 and cysteine 32. The 212-residue stretch at 26–237 (NPLTTTCPPD…YSKAPFTMVL (212 aa)) folds into the GH16 domain. 3 N-linked (GlcNAc...) asparagine glycosylation sites follow: asparagine 41, asparagine 47, and asparagine 56. Catalysis depends on glutamate 118, which acts as the Nucleophile. Glutamate 122 acts as the Proton donor in catalysis. Glutamate 122 contacts chitin. N-linked (GlcNAc...) asparagine glycans are attached at residues asparagine 127, asparagine 141, and asparagine 161. Arginine 203, tryptophan 207, and threonine 218 together coordinate chitin. Residues asparagine 252 and asparagine 269 are each glycosylated (N-linked (GlcNAc...) asparagine). The helical transmembrane segment at 298 to 318 (VYIGAGCVGAALLAGFIFFFI) threads the bilayer.

The protein belongs to the glycosyl hydrolase 16 family. CRH1 subfamily. In terms of processing, the GPI-like anchor contains a phosphoceramide lipid group. The anchor position has not been determined.

It localises to the cell membrane. It is found in the secreted. Its subcellular location is the cell wall. The catalysed reaction is Random endo-hydrolysis of N-acetyl-beta-D-glucosaminide (1-&gt;4)-beta-linkages in chitin and chitodextrins.. Functionally, dual chitinase/transglycosylase that plays a role in cell wall architecture. Chitinase and transglycosylase activities are coupled. Required for the polysaccharide cross-linking at the septa and the cell wall. More specifically, transfers chitin to 1,6-beta-glucan in the cell wall. This chain is Crh-like protein 3, found in Aspergillus fumigatus (strain ATCC MYA-4609 / CBS 101355 / FGSC A1100 / Af293) (Neosartorya fumigata).